The primary structure comprises 155 residues: UPF0178 protein Clos_2709 (155 aa).

Belongs to the UPF0178 family.

This chain is UPF0178 protein Clos_2709, found in Alkaliphilus oremlandii (strain OhILAs) (Clostridium oremlandii (strain OhILAs)).